A 119-amino-acid polypeptide reads, in one-letter code: Thioredoxin H4 (119 aa).

One can recognise a Thioredoxin domain in the interval 2 to 115; it reads AAEEGQVIGC…LQAKIVKHTG (114 aa). Residues Cys40 and Cys43 each act as nucleophile in the active site. The cysteines at positions 40 and 43 are disulfide-linked.

This sequence belongs to the thioredoxin family. Plant H-type subfamily. Interacts with MDH1.

It is found in the cytoplasm. Its function is as follows. Thiol-disulfide oxidoreductase probably involved in the redox regulation of a number of cytosolic enzymes. Possesses insulin disulfide bonds reducing activity. This is Thioredoxin H4 (TRX4) from Arabidopsis thaliana (Mouse-ear cress).